The primary structure comprises 195 residues: MTWPYATPGIPDELFERAEGVPMTKAEVRSVALSKLRLRRGGVLVDVGCGTGSVSVEAALIMGEGSRVYAVDYDEEALMLTKRNAEKFGVADRVVLVRGKAPEVLAELPKADRYFVGGGGLELPAIIKAAVERMEKGIIVADVVTLESLKAAVEALGELGLDYEVTQIFVARGQRKGRYTVMTALNPVYIITAYA.

S-adenosyl-L-methionine is bound by residues threonine 24, 48–52 (GCGTG), aspartate 72, and alanine 101.

Belongs to the methyltransferase superfamily. Archaeal-type CbiT family.

It carries out the reaction Co-precorrin-6B + S-adenosyl-L-methionine = Co-precorrin-7 + S-adenosyl-L-homocysteine + CO2. It participates in cofactor biosynthesis; adenosylcobalamin biosynthesis; cob(II)yrinate a,c-diamide from sirohydrochlorin (anaerobic route): step 8/10. Functionally, catalyzes the methylation of C-15 in cobalt-precorrin-6B followed by the decarboxylation of C-12 to form cobalt-precorrin-7. This chain is Probable cobalt-precorrin-6B C(15)-methyltransferase (decarboxylating), found in Pyrobaculum calidifontis (strain DSM 21063 / JCM 11548 / VA1).